A 768-amino-acid polypeptide reads, in one-letter code: Actin filament-associated protein 1-like 1 (768 aa).

The segment at Asp-82–His-145 is disordered. Phosphoserine is present on residues Ser-94, Ser-98, Ser-104, and Ser-153. The tract at residues Gly-173–Glu-211 is disordered. Over residues Ser-177 to Glu-190 the composition is skewed to low complexity. In terms of domain architecture, PH 1 spans Glu-220 to Lys-316. A phosphoserine mark is found at Ser-329 and Ser-343. Residues Glu-418–Gly-512 form the PH 2 domain. Tyr-557 is subject to Phosphotyrosine. The tract at residues Gln-566–Ser-604 is disordered. A compositionally biased stretch (basic and acidic residues) spans Glu-587 to Val-596. Residues Gly-611–Ser-700 adopt a coiled-coil conformation. The disordered stretch occupies residues Pro-705–Thr-768. Positions Ser-710 to Pro-729 are enriched in polar residues. A Phosphoserine modification is found at Ser-747. Residues Lys-759–Thr-768 show a composition bias toward basic and acidic residues.

Interacts with CTTN. Expressed in breast, colon and brain. In all 3 tissues, expressed in the microvasculature (at protein level). In addition, in the breast, found in the contractile myoepithelial cell layer which surrounds the breast ducts (at protein level). In the colon, expressed in the mucous membrane and colonic crypts and in the smooth muscle cell layer which provide movement of the colon (at protein level). In the cerebellum, localized around the Purkinje neurons and the granule cells of the granular layer, but not inside cell bodies (at protein level). Outside of the cerebellar cortex, expressed in glial cells (at protein level). Highly expressed away from the cell bodies within the dentate nucleus (at protein level).

It is found in the cytoplasm. The protein localises to the cell projection. Its subcellular location is the podosome. The protein resides in the invadopodium. It localises to the cytoskeleton. It is found in the stress fiber. In terms of biological role, may be involved in podosome and invadosome formation. This is Actin filament-associated protein 1-like 1 (AFAP1L1) from Homo sapiens (Human).